A 626-amino-acid chain; its full sequence is MADSATLDATTVQVLQDLANRLRVHSIRATCASGSGHPTSCCSAAEIVSVLFFHTMRYRQTEPAHPDNDRFVLSKGHAAPLLYAAWVEAGSISEPDLLNLRTIHCDLEGHPTPRLSFVDVATGSLGQGLGAACGMAYTGKYLDKASYRVFCLLGDGESSEGSVWEALAFASHYGLDNLVAVFDVNRLGQSGVAPLKHCTDIYRNRCEAFGWNTYLVDGHDVEALCQAFSQAAQGKNKPTAIIAKTYKGRGIPNVEDAENWHGKPLPKERADEIIRLIKSQIKTNRNLLPKPPVEGSPPVSITNIKMTCLPDYKVGDKVATQKAYGLALAKLGLANERVVVLDGDPKNSTFFEIFKKEHPERFIECFAAEQNMVSVALGCATRGRTITFVTTLGAFLTRAFDQIRMGAISQSNINLIGSHCGVSVGEDGPSQMALEDLAMFRSIPNCTVFLPSDAVSTEHAVYLAANSEGMCFIRTNRSETAVIYTPQEHFEIGRAKVIRHSNNDKVTVIGAGVTLHEALAAADALSQQDISICVIDPFTIKPLDAATIISCAKATDGRVVTVEDHYQEGGIGEAVCAAVSGEPAIHVHQLSVSGVSERNRKPSELLSIFGVSARHIIAAVKYTLMN.

Position 37 (H37) interacts with substrate. Thiamine diphosphate is bound by residues S40, H77, and 123–125; that span reads GSL. D155 contacts Mg(2+). The thiamine diphosphate site is built by G156 and N185. N185 and L187 together coordinate Mg(2+). Thiamine diphosphate-binding residues include K247 and H261. Residues H261 and S348 each contribute to the substrate site. Thiamine diphosphate is bound by residues E369 and F395. The active-site Proton donor is E369. Residues H419 and D427 each contribute to the substrate site. Q431 is a binding site for thiamine diphosphate. R477 serves as a coordination point for substrate.

The protein belongs to the transketolase family. In terms of assembly, homodimer. It depends on Mg(2+) as a cofactor. Ca(2+) is required as a cofactor. The cofactor is Mn(2+). Co(2+) serves as cofactor. Requires thiamine diphosphate as cofactor.

The catalysed reaction is D-sedoheptulose 7-phosphate + D-glyceraldehyde 3-phosphate = aldehydo-D-ribose 5-phosphate + D-xylulose 5-phosphate. In terms of biological role, plays an essential role in total transketolase activity and cell proliferation in cancer cells; after transfection with anti-TKTL1 siRNA, total transketolase activity dramatically decreases and proliferation was significantly inhibited in cancer cells. Plays a pivotal role in carcinogenesis. In Bos taurus (Bovine), this protein is Transketolase-like protein 2 (TKTL2).